We begin with the raw amino-acid sequence, 322 residues long: MKTTFLEFEQPIAELEAKIEELRFVQDDSAVDISEEISRLASKSQQLTKDLYANLTPWQVAQIARHPQRPYTLDYVREIFTDFHELHGDRTFADDLSIVGGLARFNGQACMVIGHQKGRDTKERALRNFGMSKPEGYRKAKRLMELADKFGLPIFTFVDTPGAFPGIDAEERGQSEAIGHNLFVMAGLKVPLIATIIGEGGSGGALAIAMGDSVIMLQFATYAVISPEGCASILWKTAEKAPEAAEALGLTAHRLKALGLIDKIVNEPLGGAHRDPKSMATMLKRALAESLRQFQGMKTSELQARRHERLMAYGKFKETEGR.

The region spanning 39-293 is the CoA carboxyltransferase C-terminal domain; that stretch reads RLASKSQQLT…KRALAESLRQ (255 aa).

The protein belongs to the AccA family. As to quaternary structure, acetyl-CoA carboxylase is a heterohexamer composed of biotin carboxyl carrier protein (AccB), biotin carboxylase (AccC) and two subunits each of ACCase subunit alpha (AccA) and ACCase subunit beta (AccD).

It localises to the cytoplasm. The catalysed reaction is N(6)-carboxybiotinyl-L-lysyl-[protein] + acetyl-CoA = N(6)-biotinyl-L-lysyl-[protein] + malonyl-CoA. The protein operates within lipid metabolism; malonyl-CoA biosynthesis; malonyl-CoA from acetyl-CoA: step 1/1. In terms of biological role, component of the acetyl coenzyme A carboxylase (ACC) complex. First, biotin carboxylase catalyzes the carboxylation of biotin on its carrier protein (BCCP) and then the CO(2) group is transferred by the carboxyltransferase to acetyl-CoA to form malonyl-CoA. The chain is Acetyl-coenzyme A carboxylase carboxyl transferase subunit alpha from Ralstonia pickettii (strain 12J).